A 630-amino-acid chain; its full sequence is Plastin-1 (630 aa).

M1 is modified (N-acetylmethionine). 2 consecutive EF-hand domains span residues 11–46 and 51–86; these read EELE…ASLP and KVRE…LKSK. D24, D26, S28, Y30, E35, D64, N66, D68, R70, and E75 together coordinate Ca(2+). Actin-binding stretches follow at residues 108 to 381 and 382 to 626; these read TSSI…GLHK and PDNN…GKGL. Calponin-homology (CH) domains follow at residues 122–238, 266–377, 396–505, and 517–626; these read EEEK…KVGL, LSPE…NTYP, SKEE…RRYT, and KVND…GKGL.

As to quaternary structure, monomer. Post-translationally, phosphorylated.

The protein resides in the cytoplasm. It is found in the cell projection. It localises to the stereocilium. Its function is as follows. Actin-bundling protein. In the inner ear, it is required for stereocilia formation. Mediates liquid packing of actin filaments that is necessary for stereocilia to grow to their proper dimensions. This Bos taurus (Bovine) protein is Plastin-1 (PLS1).